Reading from the N-terminus, the 745-residue chain is 5-methyltetrahydropteroyltriglutamate--homocysteine methyltransferase (745 aa).

Residues 17–20 (RELK) and Lys-111 each bind 5-methyltetrahydropteroyltri-L-glutamate. L-homocysteine is bound by residues 421 to 423 (IGS) and Glu-474. Residues 421 to 423 (IGS) and Glu-474 contribute to the L-methionine site. 5-methyltetrahydropteroyltri-L-glutamate-binding positions include 505–506 (RC) and Trp-551. Asp-589 provides a ligand contact to L-homocysteine. Asp-589 contributes to the L-methionine binding site. Glu-595 contacts 5-methyltetrahydropteroyltri-L-glutamate. Zn(2+)-binding residues include His-631, Cys-633, and Glu-655. His-684 serves as the catalytic Proton donor. Cys-716 is a binding site for Zn(2+).

Belongs to the vitamin-B12 independent methionine synthase family. Zn(2+) is required as a cofactor.

The enzyme catalyses 5-methyltetrahydropteroyltri-L-glutamate + L-homocysteine = tetrahydropteroyltri-L-glutamate + L-methionine. It functions in the pathway amino-acid biosynthesis; L-methionine biosynthesis via de novo pathway; L-methionine from L-homocysteine (MetE route): step 1/1. Functionally, catalyzes the transfer of a methyl group from 5-methyltetrahydrofolate to homocysteine resulting in methionine formation. This Thermodesulfovibrio yellowstonii (strain ATCC 51303 / DSM 11347 / YP87) protein is 5-methyltetrahydropteroyltriglutamate--homocysteine methyltransferase.